A 560-amino-acid polypeptide reads, in one-letter code: Solute carrier family 22 member 6 (560 aa).

At 1–15 the chain is on the cytoplasmic side; it reads MAFSDLLEQVGSTGR. A helical transmembrane segment spans residues 16 to 36; sequence FQVLHVTLLSMPILMMASHNL. At 37–143 the chain is on the extracellular side; that stretch reads LQNFVAAVPP…LVCDYRALKQ (107 aa). Residues 144-164 traverse the membrane as a helical segment; the sequence is MSQTTYMGGVLVGAIVFGGLS. The Cytoplasmic portion of the chain corresponds to 165–170; it reads DRFGRR. The chain crosses the membrane as a helical span at residues 171-191; sequence VLLLISNLMMAIGGTCVAFST. At 192–201 the chain is on the extracellular side; sequence SFTMFCVFRV. A helical membrane pass occupies residues 202-222; it reads CCGMALSGLVLNSFSLIVEWI. The Cytoplasmic portion of the chain corresponds to 223–228; that stretch reads PTRVRT. A helical transmembrane segment spans residues 229-249; sequence VVGTGTGYCYTTGQLILAAVA. Residues 250 to 256 lie on the Extracellular side of the membrane; the sequence is YCIRDWR. Residues 257–277 form a helical membrane-spanning segment; the sequence is WLTLAVSLPFYVSFLYSWWFL. At 278–345 the chain is on the cytoplasmic side; it reads ESARWLVLTK…DLLRTSTMRT (68 aa). The chain crosses the membrane as a helical span at residues 346–366; that stretch reads ITICLSAVWFSTSFAYYGLSM. Residues 367-374 lie on the Extracellular side of the membrane; sequence DLQKFGVS. A helical membrane pass occupies residues 375-395; it reads IYLIQIIFGAVDIPAKIIVTI. The Cytoplasmic segment spans residues 396-406; that stretch reads CMSMLGRRPSQ. Residues 407 to 427 form a helical membrane-spanning segment; that stretch reads CGALVLAGIMILINLLVPSDL. At 428–433 the chain is on the extracellular side; it reads QMLRTS. Residues 434 to 454 traverse the membrane as a helical segment; the sequence is LAVIGKGCLAASFNCCYLYAG. Topologically, residues 455 to 465 are cytoplasmic; the sequence is ELYPTVIRQSG. The chain crosses the membrane as a helical span at residues 466 to 486; that stretch reads MGWVSMMARFGAMVAPMVLLL. At 487 to 491 the chain is on the extracellular side; that stretch reads GDDYP. The chain crosses the membrane as a helical span at residues 492-512; sequence WIPGFIYGGAPIVSGIFAFFL. Residues 513–560 lie on the Cytoplasmic side of the membrane; sequence PETLSQPLPDTIQDIDDRGLARTNSKRLPEKLDLAMKDPSCVLLKESV.

The protein belongs to the major facilitator (TC 2.A.1) superfamily. Organic cation transporter (TC 2.A.1.19) family. Glycosylated. Glycosylation is necessary for proper targeting of the transporter to the plasma membrane.

The protein localises to the cell membrane. It localises to the basolateral cell membrane. It is found in the basal cell membrane. In terms of biological role, involved in the renal elimination of endogenous and exogenous organic anions. Functions as organic anion exchanger when the uptake of one molecule of organic anion is coupled with an efflux of one molecule of endogenous dicarboxylic acid (glutarate, ketoglutarate, etc). Mediates the sodium-independent uptake of p-aminohippurate (PAH), 2,3-dimercapto-1-propanesulfonic acid (DMPS), cidofovir, adefovir, 9-(2-phosphonylmethoxyethyl) guanine (PMEG), 9-(2-phosphonylmethoxyethyl) diaminopurine (PMEDAP), ochratoxin (OTA), acyclovir (ACV), 3'-azido-3-'deoxythymidine (AZT), cimetidine (CMD), 2,4-dichloro-phenoxyacetate (2,4-D), hippurate (HA), indoleacetate (IA), indoxyl sulfate (IS) and 3-carboxy-4-methyl-5-propyl-2-furanpropionate (CMPF) and edaravone sulfate. PAH uptake is inhibited by p-chloromercuribenzenesulphonate (PCMBS), diethyl pyrocarbonate (DEPC), indomethacin, sulindac, diclofenac, carprofen, okadaic acid, benzothiazolylcysteine (BTC), S-chlorotrifluoroethylcysteine (CTFC), cysteine S-conjugates S-dichlorovinylcysteine (DCVC), furosemide, steviol, phorbol 12-myristate 13-acetate (PMA), calcium ionophore A23187, benzylpenicillin, bumetamide, losartan, probenecid, phenol red, urate, glutarate and alpha-ketoglutarate. This chain is Solute carrier family 22 member 6 (slc22a6), found in Danio rerio (Zebrafish).